A 748-amino-acid chain; its full sequence is Photosystem I P700 chlorophyll a apoprotein A1 (748 aa).

8 consecutive transmembrane segments (helical) span residues 69 to 92, 155 to 178, 194 to 218, 290 to 308, 345 to 368, 384 to 410, 432 to 454, and 529 to 547; these read IFSA…FHGA, LYVT…FHYH, LNHH…HVSL, VAHH…GHMY, WHAN…HHMY, LSLF…IYMV, AIIS…LYIH, and FMVH…LILL. [4Fe-4S] cluster contacts are provided by Cys-571 and Cys-580. Helical transmembrane passes span 587–608 and 662–684; these read HVFL…HFSW and LSAY…MFLF. Residue His-673 coordinates chlorophyll a'. The chlorophyll a site is built by Met-681 and Tyr-689. Trp-690 serves as a coordination point for phylloquinone. The helical transmembrane segment at 722–742 threads the bilayer; sequence AVGVAHYLLGGIATTWAFFLA.

The protein belongs to the PsaA/PsaB family. As to quaternary structure, the PsaA/B heterodimer binds the P700 chlorophyll special pair and subsequent electron acceptors. PSI consists of a core antenna complex that captures photons, and an electron transfer chain that converts photonic excitation into a charge separation. The eukaryotic PSI reaction center is composed of at least 11 subunits. It depends on P700 is a chlorophyll a/chlorophyll a' dimer, A0 is one or more chlorophyll a, A1 is one or both phylloquinones and FX is a shared 4Fe-4S iron-sulfur center. as a cofactor.

The protein localises to the plastid. It localises to the chloroplast thylakoid membrane. The enzyme catalyses reduced [plastocyanin] + hnu + oxidized [2Fe-2S]-[ferredoxin] = oxidized [plastocyanin] + reduced [2Fe-2S]-[ferredoxin]. Its function is as follows. PsaA and PsaB bind P700, the primary electron donor of photosystem I (PSI), as well as the electron acceptors A0, A1 and FX. PSI is a plastocyanin/cytochrome c6-ferredoxin oxidoreductase, converting photonic excitation into a charge separation, which transfers an electron from the donor P700 chlorophyll pair to the spectroscopically characterized acceptors A0, A1, FX, FA and FB in turn. Oxidized P700 is reduced on the lumenal side of the thylakoid membrane by plastocyanin or cytochrome c6. This chain is Photosystem I P700 chlorophyll a apoprotein A1, found in Cyanidioschyzon merolae (strain NIES-3377 / 10D) (Unicellular red alga).